The following is a 509-amino-acid chain: Angiopoietin-4 (509 aa).

Residues 1–21 (MLCQPAMLLDGLLLLATMAAA) form the signal peptide. 8 N-linked (GlcNAc...) asparagine glycosylation sites follow: N105, N135, N149, N167, N256, N306, N317, and N417. The stretch at 181-269 (LSTNKLERQM…LQQQQQQLTE (89 aa)) forms a coiled coil. Positions 288–508 (KTPKPVFQDC…GTRMMLRPMG (221 aa)) constitute a Fibrinogen C-terminal domain. C297 and C326 form a disulfide bridge. The tract at residues 416 to 436 (VNDSSSSAGRKNSLAPQGTKF) is disordered. C450 and C463 are joined by a disulfide.

Homodimer; disulfide-linked. Interacts with TEK/TIE2. In terms of tissue distribution, widely expressed.

Its subcellular location is the secreted. Functionally, binds to TEK/TIE2, modulating ANGPT1 signaling. Can induce tyrosine phosphorylation of TEK/TIE2. Promotes endothelial cell survival, migration and angiogenesis. The sequence is that of Angiopoietin-4 (Angpt4) from Mus musculus (Mouse).